Reading from the N-terminus, the 615-residue chain is Sodium-dependent noradrenaline transporter (615 aa).

The interval 1–28 (MLLARMNPQVQPENGGAGPGSEQPPRKR) is disordered. The Cytoplasmic segment spans residues 1–60 (MLLARMNPQVQPENGGAGPGSEQPPRKRKEVLVVKERNGVQCLLASRDGDEQPRETWGKK). The helical transmembrane segment at 61 to 86 (IDFLLSVVGFAVDLANVWRFPYLCYK) threads the bilayer. Residues glycine 69, alanine 71, and valine 72 each coordinate Na(+). Aspartate 73 contacts (R)-noradrenaline. Aspartate 73 is a dopamine binding site. Asparagine 76 lines the Na(+) pocket. (R)-noradrenaline contacts are provided by tyrosine 85 and lysine 86. The Extracellular portion of the chain corresponds to 87–90 (NGGG). Residues 91–114 (AFLIPYTLFLIIAGMPLFYMELAL) form a helical membrane-spanning segment. The Cytoplasmic segment spans residues 115–133 (GQYNREGAATVWKICPFFK). Residues 134-164 (GVGYAVILIALYVGFYYNVIIAWSLYYLFSS) traverse the membrane as a helical segment. Residues alanine 143 and glycine 147 each contribute to the (R)-noradrenaline site. Alanine 143 serves as a coordination point for dopamine. Over 165–231 (FTPTLPWTDC…SSGIHDIGLP (67 aa)) the chain is Extracellular. An intrachain disulfide couples cysteine 174 to cysteine 183. Asparagine 182, asparagine 190, and asparagine 196 each carry an N-linked (GlcNAc...) asparagine glycan. Residues 232 to 252 (QWQLLLCLIIVVIVLFFSLWK) traverse the membrane as a helical segment. The Cytoplasmic segment spans residues 253–255 (GVK). A helical transmembrane segment spans residues 256-280 (TSGKVVWITATLPYLVLFVLLVHGI). Over 281–304 (TLPGASNGINAYLHIDFYRLKEAT) the chain is Extracellular. Residues 305-330 (VWIDAATQIFFSLGAGFGVLIAFASY) traverse the membrane as a helical segment. Phenylalanine 315 serves as a coordination point for (R)-noradrenaline. Phenylalanine 315 contacts dopamine. A Na(+)-binding site is contributed by serine 316. Residues 331–336 (NKFDNN) are Cytoplasmic-facing. Residues 337–360 (CYRDALLTSTINCVTSFISGFAIF) traverse the membrane as a helical segment. Asparagine 348 serves as a coordination point for Na(+). At 361–400 (SILGYMAHEHKVNIEDVATEGAGLVFILYPEAISTLSGST) the chain is on the extracellular side. Glutamate 380 lines the (R)-noradrenaline pocket. Glutamate 380 lines the dopamine pocket. Residues 401–426 (FWAIVFFIMLLALGIDSSMGGMEAVI) form a helical membrane-spanning segment. Na(+) is bound by residues aspartate 416 and serine 417. At 427-441 (TGLADDFQVLKRHRK) the chain is on the cytoplasmic side. A helical membrane pass occupies residues 442 to 462 (LFTFAVSFGTFLLALFCITKG). Residue glycine 463 is a topological domain, extracellular. Residues 464–490 (IYVLTLLDTFAAGTSILFAVLMEAIGV) traverse the membrane as a helical segment. Topologically, residues 491 to 520 (SWFYGVDRFSNDIQQMMGFKPGLYWRLCWK) are cytoplasmic. Residues 521–543 (FVSPAFLLFVVIVSIINFKPLTY) traverse the membrane as a helical segment. At 544-546 (DDY) the chain is on the extracellular side. A helical transmembrane segment spans residues 547–567 (IFPLWANWVGWGIAGSSMVLV). Topologically, residues 568–615 (PAYIVYKFFSTRGSIRERLAYGITPASEHHLVAQRDIRQFQLQHWLAI) are cytoplasmic.

Belongs to the sodium:neurotransmitter symporter (SNF) (TC 2.A.22) family. SLC6A2 subfamily. As to quaternary structure, monomer. Can form homodimers in the cell membrane; homodimerization is mostly mediated by cholesterol and lipids, and regulates neurotransmitter transport activity. Interacts with PRKCABP. Post-translationally, palmitoylated. Palmitoylation regulates protein levels and neurotransmitter transport.

The protein localises to the cell membrane. Its subcellular location is the cell projection. The protein resides in the axon. It is found in the synapse. It localises to the synaptosome. The enzyme catalyses (R)-noradrenaline(out) + chloride(out) + Na(+)(out) = (R)-noradrenaline(in) + chloride(in) + Na(+)(in). It catalyses the reaction dopamine(out) + chloride(out) + Na(+)(out) = dopamine(in) + chloride(in) + Na(+)(in). The catalysed reaction is dopamine(out) + chloride(out) + 2 Na(+)(out) = dopamine(in) + chloride(in) + 2 Na(+)(in). With respect to regulation, inhibited by nisoxetine, oxaprotiline and desipramin. Its function is as follows. Mediates sodium- and chloride-dependent transport of norepinephrine (also known as noradrenaline), the primary signaling neurotransmitter in the autonomic sympathetic nervous system. Is responsible for norepinephrine re-uptake and clearance from the synaptic cleft, thus playing a crucial role in norepinephrine inactivation and homeostasis. Can also mediate sodium- and chloride-dependent transport of dopamine. In Bos taurus (Bovine), this protein is Sodium-dependent noradrenaline transporter (SLC6A2).